A 289-amino-acid polypeptide reads, in one-letter code: Acetylglutamate kinase (289 aa).

Residues 60–61 (GG), Arg82, and Asn186 each bind substrate.

The protein belongs to the acetylglutamate kinase family. ArgB subfamily.

The protein localises to the cytoplasm. The enzyme catalyses N-acetyl-L-glutamate + ATP = N-acetyl-L-glutamyl 5-phosphate + ADP. The protein operates within amino-acid biosynthesis; L-arginine biosynthesis; N(2)-acetyl-L-ornithine from L-glutamate: step 2/4. Functionally, catalyzes the ATP-dependent phosphorylation of N-acetyl-L-glutamate. In Methanoculleus marisnigri (strain ATCC 35101 / DSM 1498 / JR1), this protein is Acetylglutamate kinase.